The sequence spans 1091 residues: E3 ubiquitin-protein ligase TRIM33 (1091 aa).

Over residues 1-13 the composition is skewed to gly residues; it reads MADNKGGGGGGGE. The tract at residues 1–87 is disordered; the sequence is MADNKGGGGG…SATPASSSSS (87 aa). The span at 52-87 shows a compositional bias: low complexity; it reads APVAAVPTDTPAEENPAPSSSSVASSSATPASSSSS. The segment at 97–154 adopts an RING-type 1 zinc-finger fold; that stretch reads CAVCKLSLQSRDTEPKLLPCLHSFCRRCLPEPERQLSVPGGTNGDIQQVGVIRCLVCR. A B box-type 1; atypical zinc finger spans residues 180 to 227; the sequence is KSEQVCTSCEDNASAVGFCVECGEWLCKTCIEAHQRVKFTKDHIITNK. Cys-185, Cys-188, Cys-209, His-213, Cys-245, His-248, Cys-268, and His-273 together coordinate Zn(2+). A B box-type 2 zinc finger spans residues 240–281; sequence QRPVFCPVHKQEQLKLFCETCDRLTCRDCQLLEHKEHRYQFL. Residues 269–361 adopt a coiled-coil conformation; it reads QLLEHKEHRY…QLESVTKERQ (93 aa). 2 disordered regions span residues 672-779 and 821-844; these read LPQP…TPPL and GKSA…GSNK. The segment covering 675-721 has biased composition (low complexity); sequence PTSNMNPSPAPSAMSPGSTGLSNSHTPVRPPSTSSTGSRGSCGSSSR. Residues 754–763 are compositionally biased toward basic and acidic residues; the sequence is KQEKAEDGRR. The segment covering 768–779 has biased composition (low complexity); the sequence is LSSPESSLTPPL. The PHD-type zinc finger occupies 850–897; it reads EDWCAVCQNGGDLLCCEKCPKVFHLTCHVPTLLSFPSGEWICTFCRDL. The Bromo domain maps to 920–1043; sequence GLSPVDQMKC…LYFEEKLPAI (124 aa). Residues 1051-1091 form a disordered region; that stretch reads PLPEFEAEDDDGDVTDDSDDDDFVQPRRKRLKSEERPVHIK. The span at 1055-1073 shows a compositional bias: acidic residues; it reads FEAEDDDGDVTDDSDDDDF. The span at 1082–1091 shows a compositional bias: basic and acidic residues; the sequence is KSEERPVHIK.

May interact with smad4.

The protein localises to the nucleus. It catalyses the reaction S-ubiquitinyl-[E2 ubiquitin-conjugating enzyme]-L-cysteine + [acceptor protein]-L-lysine = [E2 ubiquitin-conjugating enzyme]-L-cysteine + N(6)-ubiquitinyl-[acceptor protein]-L-lysine.. The protein operates within protein modification; protein ubiquitination. Acts as an E3 ubiquitin-protein ligase for smad4. Promotes ectoderm embryonic development at the expense of other germ layers. Inhibits mesodermal differentiation. Promotes neural development of the ectoderm. Promotes smad4 alpha degradation via the ubiquitin proteasome pathway. May act as a transcriptional repressor. The polypeptide is E3 ubiquitin-protein ligase TRIM33 (trim33) (Xenopus laevis (African clawed frog)).